A 353-amino-acid polypeptide reads, in one-letter code: MSSKQPSLSYKDAGVDIDAGEALVERIKGVAKRTARPEVMGGLGGFGALCEIPAGYKQPVLVSGTDGVGTKLRLALNLNKHDSIGQDLVAMCVNDLVVCGAEPLFFLDYYATGKLNVDVAATVVTGIGAGCELAGCSLVGGETAEMPGMYEGEDYDLAGFCVGVVEKAEIIDGSRVQAGDALIALPSSGPHSNGYSLIRKIIEVSGADIEQVQLDGKPLADLLMAPTRIYVKPLLQLIKQTGAVKAMAHITGGGLLDNIPRVLPDNAQAVIDVASWNRPAVFDWLQEQGNVDETEMHRVLNCGVGMVICVAQSDAEKALEVLRAAGEQPWQIGRIETCGADAERVVLNNLKNH.

Belongs to the AIR synthase family.

The protein resides in the cytoplasm. It carries out the reaction 2-formamido-N(1)-(5-O-phospho-beta-D-ribosyl)acetamidine + ATP = 5-amino-1-(5-phospho-beta-D-ribosyl)imidazole + ADP + phosphate + H(+). The protein operates within purine metabolism; IMP biosynthesis via de novo pathway; 5-amino-1-(5-phospho-D-ribosyl)imidazole from N(2)-formyl-N(1)-(5-phospho-D-ribosyl)glycinamide: step 2/2. This is Phosphoribosylformylglycinamidine cyclo-ligase from Pseudomonas aeruginosa (strain LESB58).